Reading from the N-terminus, the 538-residue chain is Solute carrier family 2, facilitated glucose transporter member 9 (538 aa).

Topologically, residues 1–34 (MDSRELALASLMCDTGGPGELSVGHQQRRTKKWS) are cytoplasmic. The residue at position 3 (serine 3) is a Phosphoserine. Residues 35–54 (FSLVVAALVGAFGSSFLYGY) traverse the membrane as a helical segment. Residues asparagine 55 and asparagine 71 are each glycosylated (N-linked (GlcNAc...) asparagine). The Extracellular segment spans residues 55–88 (NLSVVNAPTPYIKAFYNGTWYRRHGQPIDPDTLT). Residues 89-109 (LLWSVTVSIFAIGGLVGTLMV) traverse the membrane as a helical segment. The Cytoplasmic portion of the chain corresponds to 110-120 (KMIGKFLGRKS). Residues 121–143 (TLLVNNGFAISAALLMACSLRAG) traverse the membrane as a helical segment. At 144-148 (TFEML) the chain is on the extracellular side. A helical transmembrane segment spans residues 149 to 170 (IVGRFIMGVDGGIALSALPMYL). Residues 171 to 181 (NEISPKEIRGS) are Cytoplasmic-facing. Residues 182–200 (LGQVTAIFICIGVFSGQLL) traverse the membrane as a helical segment. Residues 201 to 211 (GLPELLGREST) are Extracellular-facing. The helical transmembrane segment at 212–233 (WPYLFGVIIVPALVQLASLPFL) threads the bilayer. At 234–297 (PESPRYLLFE…LLRAPFVRWQ (64 aa)) the chain is on the cytoplasmic side. The helical transmembrane segment at 298 to 319 (VITVIITMASYQLCGLNAIWFY) threads the bilayer. The Extracellular segment spans residues 320-333 (TNSIFGKAGIPQDK). The helical transmembrane segment at 334–356 (IPYITLSTGGIETLAAIFSGLVI) threads the bilayer. Topologically, residues 357-362 (ERLGRR) are cytoplasmic. A helical transmembrane segment spans residues 363-385 (PLLIGGFGLMALFFGTLTATLTL). Topologically, residues 386 to 390 (QDQAP) are extracellular. The helical transmembrane segment at 391–418 (WVPYLSIVCILAIIASFCSGPGGIPFIL) threads the bilayer. At 419–429 (TGEFFQQSERP) the chain is on the cytoplasmic side. A helical transmembrane segment spans residues 430 to 453 (AAFMIAGTVNWLSNFAVGLLFPFI). Residues 454 to 458 (QKSLD) are Extracellular-facing. Residues 459–480 (SYCFLVFATICIAGATYFYFVL) traverse the membrane as a helical segment. Residues 481–538 (PETKNRTHAEISQAFAKRNKAQPPEVKADSAMTEEKANSQTEPDSSSTLDSYGQNKIV) lie on the Cytoplasmic side of the membrane. The interval 495-538 (FAKRNKAQPPEVKADSAMTEEKANSQTEPDSSSTLDSYGQNKIV) is disordered. The span at 518–538 (NSQTEPDSSSTLDSYGQNKIV) shows a compositional bias: polar residues.

The protein belongs to the major facilitator superfamily. Sugar transporter (TC 2.A.1.1) family. Post-translationally, N-glycosylated. In terms of tissue distribution, highly expressed in the intestine, with high expression in the jejunum and ileum, the segments of the intestine that perform the majority of urate excretion. Isoform 1: Widely expressed. Isoform 1: In kidney, expressed at low levels in proximal tubules. Isoform 2: Primarily expressed in liver and kidney; with specific expression in distal convoluted and connecting tubules of kidney.

Its subcellular location is the basolateral cell membrane. It is found in the apical cell membrane. It carries out the reaction urate(out) = urate(in). High-capacity urate transporter, which may play a role in the urate reabsorption by proximal tubules. May have a residual high-affinity, low-capacity glucose and fructose transporter activity. Transports urate at rates 45- to 60-fold faster than glucose. Does not transport galactose. May mediate small uptake of adenine but not of other nucleobases. The sequence is that of Solute carrier family 2, facilitated glucose transporter member 9 from Mus musculus (Mouse).